A 226-amino-acid chain; its full sequence is Glutathione peroxidase 3 (226 aa).

The signal sequence occupies residues 1–24 (MARLLQASCLLSLLLAGFVPQSRG). Sec73 is an active-site residue. A non-standard amino acid (selenocysteine) is located at residue Sec73.

It belongs to the glutathione peroxidase family. As to quaternary structure, homotetramer. As to expression, secreted in plasma.

It is found in the secreted. It carries out the reaction 2 glutathione + H2O2 = glutathione disulfide + 2 H2O. The catalysed reaction is tert-butyl hydroperoxide + 2 glutathione = tert-butanol + glutathione disulfide + H2O. Protects cells and enzymes from oxidative damage, by catalyzing the reduction of hydrogen peroxide, lipid peroxides and organic hydroperoxide, by glutathione. The protein is Glutathione peroxidase 3 of Hylobates lar (Lar gibbon).